The following is a 528-amino-acid chain: Chaperonin GroEL, chloroplastic (528 aa).

ATP contacts are provided by residues 29–32 (TLGP), 86–90 (DGTTT), glycine 414, and aspartate 496.

The protein belongs to the chaperonin (HSP60) family. As to quaternary structure, forms a cylinder of 14 subunits composed of two heptameric rings stacked back-to-back. Interacts with the co-chaperonin GroES.

The protein localises to the plastid. It is found in the chloroplast. It carries out the reaction ATP + H2O + a folded polypeptide = ADP + phosphate + an unfolded polypeptide.. In terms of biological role, together with its co-chaperonin GroES, plays an essential role in assisting protein folding. The GroEL-GroES system forms a nano-cage that allows encapsulation of the non-native substrate proteins and provides a physical environment optimized to promote and accelerate protein folding. This is Chaperonin GroEL, chloroplastic from Gracilaria tenuistipitata var. liui (Red alga).